The sequence spans 358 residues: Putative inhibitor of apoptosis (358 aa).

BIR repeat units follow at residues 4–70 and 90–157; these read EKDR…CPFL and YAAR…CEYL. Zn(2+) is bound by residues Cys-127, Cys-130, His-147, and Cys-154. Positions 193–283 constitute a CARD domain; sequence EPPNDLSLIR…MLYKHLFVQQ (91 aa). The segment at 311–346 adopts an RING-type zinc-finger fold; that stretch reads CKVCMDKEVSIVFIPCGHLVVCKDCAPSLRKCPICR.

It belongs to the IAP family.

The chain is Putative inhibitor of apoptosis (PIAP) from Sus scrofa (Pig).